Consider the following 420-residue polypeptide: Glutaryl-CoA dehydrogenase, mitochondrial (420 aa).

Arg125–Ser126 contacts substrate. Residues Phe164–Thr167, Ser173, and Trp198–Thr200 contribute to the FAD site. A substrate-binding site is contributed by Ser173. Residues Phe273 to Asn277 and Arg280 contribute to the substrate site. Glu400 acts as the Proton acceptor in catalysis. Positions 402 and 420 each coordinate FAD.

It belongs to the acyl-CoA dehydrogenase family. The cofactor is FAD.

It is found in the mitochondrion matrix. The catalysed reaction is glutaryl-CoA + oxidized [electron-transfer flavoprotein] + 2 H(+) = (2E)-butenoyl-CoA + reduced [electron-transfer flavoprotein] + CO2. It functions in the pathway amino-acid metabolism; lysine degradation. Its pathway is amino-acid metabolism; tryptophan metabolism. This chain is Glutaryl-CoA dehydrogenase, mitochondrial (gcdh), found in Dictyostelium discoideum (Social amoeba).